The primary structure comprises 157 residues: SsrA-binding protein (157 aa).

It belongs to the SmpB family.

The protein resides in the cytoplasm. Required for rescue of stalled ribosomes mediated by trans-translation. Binds to transfer-messenger RNA (tmRNA), required for stable association of tmRNA with ribosomes. tmRNA and SmpB together mimic tRNA shape, replacing the anticodon stem-loop with SmpB. tmRNA is encoded by the ssrA gene; the 2 termini fold to resemble tRNA(Ala) and it encodes a 'tag peptide', a short internal open reading frame. During trans-translation Ala-aminoacylated tmRNA acts like a tRNA, entering the A-site of stalled ribosomes, displacing the stalled mRNA. The ribosome then switches to translate the ORF on the tmRNA; the nascent peptide is terminated with the 'tag peptide' encoded by the tmRNA and targeted for degradation. The ribosome is freed to recommence translation, which seems to be the essential function of trans-translation. The protein is SsrA-binding protein of Chlorobaculum tepidum (strain ATCC 49652 / DSM 12025 / NBRC 103806 / TLS) (Chlorobium tepidum).